The primary structure comprises 720 residues: Viral guanylyltransferase VP3 (720 aa).

The protein resides in the virion. The catalysed reaction is a 5'-end diphospho-ribonucleoside in mRNA + GTP + H(+) = a 5'-end (5'-triphosphoguanosine)-ribonucleoside in mRNA + diphosphate. It catalyses the reaction a 5'-end (5'-triphosphoguanosine)-ribonucleoside in mRNA + S-adenosyl-L-methionine = a 5'-end (N(7)-methyl 5'-triphosphoguanosine)-ribonucleoside in mRNA + S-adenosyl-L-homocysteine. Outer capsid protein involved in mRNA capping. Catalyzes the last 3 enzymatic activities for formation of the 5' cap structure on the viral plus-strand transcripts, namely the RNA guanylyltransferase, RNA-7N- and RNA-2'O-methyltransferase activities. In Banna virus (BAV), this protein is Viral guanylyltransferase VP3 (Segment-3).